The sequence spans 348 residues: Lysophosphatidic acid receptor 2 (348 aa).

Residues 1 to 30 (MGQCYYNETIGFFYNNSGKELSSHWRPKDV) are Extracellular-facing. N-linked (GlcNAc...) asparagine glycosylation is found at Asn7 and Asn15. The helical transmembrane segment at 31–51 (VVVALGLTVSVLVLLTNLLVI) threads the bilayer. Topologically, residues 52–66 (AAIASNRRFHQPIYY) are cytoplasmic. The chain crosses the membrane as a helical span at residues 67–87 (LLGNLAAADLFAGVAYLFLMF). Over 88-100 (HTGPRTARLSLEG) the chain is Extracellular. A helical transmembrane segment spans residues 101–123 (WFLRQGLLDTSLTASVATLLAIA). Residues 124 to 143 (VERHRSVMAVQLHSRLPRGR) lie on the Cytoplasmic side of the membrane. The helical transmembrane segment at 144–164 (VVMLIVGVWVAALGLGLLPAH) threads the bilayer. Residues 165 to 185 (SWHCLCALDRCSRMAPLLSRS) are Extracellular-facing. The chain crosses the membrane as a helical span at residues 186 to 206 (YLAVWALSSLLVFLLMVAVYT). Residues 207–239 (RIFFYVRRRVQRMAEHVSCHPRYRETTLSLVKT) lie on the Cytoplasmic side of the membrane. Residues 240-260 (VVIILGAFVVCWTPGQVVLLL) form a helical membrane-spanning segment. At 261–276 (DGLGCESCNVLAVEKY) the chain is on the extracellular side. The chain crosses the membrane as a helical span at residues 277-294 (FLLLAEANSLVNAAVYSC). At 295-348 (RDAEMRRTFRRLLCCACLRQSTRESVHYTSSAQGGASTRIMLPENGHPLMDSTL) the chain is on the cytoplasmic side. Cys308 carries S-palmitoyl cysteine lipidation. The PDZ-binding signature appears at 345–348 (DSTL).

This sequence belongs to the G-protein coupled receptor 1 family. As to quaternary structure, interacts with SLC9A3R2/NHERF2, MAGI3 and PLCB3. Interacts with RALA and GRK2. Expressed most abundantly in testes and peripheral blood leukocytes with less expression in pancreas, spleen, thymus and prostate. Little or no expression in heart, brain, placenta, lung, liver, skeletal muscle, kidney, ovary, small intestine, or colon.

It is found in the cell surface. It localises to the cell membrane. Its function is as follows. Receptor for lysophosphatidic acid (LPA), a mediator of diverse cellular activities. Seems to be coupled to the G(i)/G(o), G(12)/G(13), and G(q) families of heteromeric G proteins. Plays a key role in phospholipase C-beta (PLC-beta) signaling pathway. Stimulates phospholipase C (PLC) activity in a manner that is independent of RALA activation. The chain is Lysophosphatidic acid receptor 2 from Homo sapiens (Human).